A 109-amino-acid chain; its full sequence is Spermidine export protein MdtI (109 aa).

Helical transmembrane passes span 6–26, 36–56, 64–84, and 88–108; these read WVHA…NVFL, FYGI…SQAV, AYAL…WVLF, and LNNK…MIKL.

Belongs to the drug/metabolite transporter (DMT) superfamily. Small multidrug resistance (SMR) (TC 2.A.7.1) family. MdtI subfamily. As to quaternary structure, forms a complex with MdtJ.

It is found in the cell inner membrane. In terms of biological role, catalyzes the excretion of spermidine. This Citrobacter koseri (strain ATCC BAA-895 / CDC 4225-83 / SGSC4696) protein is Spermidine export protein MdtI.